The following is a 405-amino-acid chain: Probable tRNA sulfurtransferase (405 aa).

The 106-residue stretch at D60–V165 folds into the THUMP domain. ATP is bound by residues M183–L184, H208–F209, R265, G287, and Q296.

This sequence belongs to the ThiI family.

The protein resides in the cytoplasm. It carries out the reaction [ThiI sulfur-carrier protein]-S-sulfanyl-L-cysteine + a uridine in tRNA + 2 reduced [2Fe-2S]-[ferredoxin] + ATP + H(+) = [ThiI sulfur-carrier protein]-L-cysteine + a 4-thiouridine in tRNA + 2 oxidized [2Fe-2S]-[ferredoxin] + AMP + diphosphate. It catalyses the reaction [ThiS sulfur-carrier protein]-C-terminal Gly-Gly-AMP + S-sulfanyl-L-cysteinyl-[cysteine desulfurase] + AH2 = [ThiS sulfur-carrier protein]-C-terminal-Gly-aminoethanethioate + L-cysteinyl-[cysteine desulfurase] + A + AMP + 2 H(+). It participates in cofactor biosynthesis; thiamine diphosphate biosynthesis. Its function is as follows. Catalyzes the ATP-dependent transfer of a sulfur to tRNA to produce 4-thiouridine in position 8 of tRNAs, which functions as a near-UV photosensor. Also catalyzes the transfer of sulfur to the sulfur carrier protein ThiS, forming ThiS-thiocarboxylate. This is a step in the synthesis of thiazole, in the thiamine biosynthesis pathway. The sulfur is donated as persulfide by IscS. The polypeptide is Probable tRNA sulfurtransferase (Pediococcus pentosaceus (strain ATCC 25745 / CCUG 21536 / LMG 10740 / 183-1w)).